Here is a 465-residue protein sequence, read N- to C-terminus: Argininosuccinate lyase (465 aa).

It belongs to the lyase 1 family. Argininosuccinate lyase subfamily.

It is found in the cytoplasm. It catalyses the reaction 2-(N(omega)-L-arginino)succinate = fumarate + L-arginine. It functions in the pathway amino-acid biosynthesis; L-arginine biosynthesis; L-arginine from L-ornithine and carbamoyl phosphate: step 3/3. This Methylococcus capsulatus (strain ATCC 33009 / NCIMB 11132 / Bath) protein is Argininosuccinate lyase.